A 136-amino-acid chain; its full sequence is Large ribosomal subunit protein uL16c (136 aa).

It belongs to the universal ribosomal protein uL16 family. Part of the 50S ribosomal subunit.

It localises to the plastid. It is found in the chloroplast. In Citrus sinensis (Sweet orange), this protein is Large ribosomal subunit protein uL16c.